Consider the following 439-residue polypeptide: GTPase Der (439 aa).

2 consecutive EngA-type G domains span residues 4–168 (PIVA…KDDE) and 177–352 (INIA…DNYT). Residues 10-17 (GRPNVGKS), 57-61 (DTGGI), 120-123 (NKID), 183-190 (GKPNVGKS), 230-234 (DTAGL), and 295-298 (NKWD) each bind GTP. Residues 353–437 (KRVKTGVLND…GIKLEFRERK (85 aa)) enclose the KH-like domain.

It belongs to the TRAFAC class TrmE-Era-EngA-EngB-Septin-like GTPase superfamily. EngA (Der) GTPase family. In terms of assembly, associates with the 50S ribosomal subunit.

Functionally, GTPase that plays an essential role in the late steps of ribosome biogenesis. This chain is GTPase Der, found in Clostridium botulinum (strain Langeland / NCTC 10281 / Type F).